The following is a 364-amino-acid chain: Selenide, water dikinase (364 aa).

U25 is a catalytic residue. U25 is a non-standard amino acid (selenocysteine). ATP-binding positions include K28, 46–48, D66, D89, and 141–143; these read GYD and GQT. Residue D48 coordinates Mg(2+). D89 contributes to the Mg(2+) binding site. D244 serves as a coordination point for Mg(2+).

This sequence belongs to the selenophosphate synthase 1 family. Class II subfamily. Homodimer. The cofactor is Mg(2+).

It carries out the reaction hydrogenselenide + ATP + H2O = selenophosphate + AMP + phosphate + 2 H(+). In terms of biological role, synthesizes selenophosphate from selenide and ATP. The polypeptide is Selenide, water dikinase (selD) (Dictyostelium discoideum (Social amoeba)).